A 335-amino-acid chain; its full sequence is Glutamyl-tRNA reductase (335 aa).

Substrate contacts are provided by residues 60-63, Ser-110, 115-117, and Gln-121; these read TCHR and ETE. Cys-61 (nucleophile) is an active-site residue. 189 to 194 contacts NADP(+); sequence GYSEIN.

The protein belongs to the glutamyl-tRNA reductase family. Homodimer.

It catalyses the reaction (S)-4-amino-5-oxopentanoate + tRNA(Glu) + NADP(+) = L-glutamyl-tRNA(Glu) + NADPH + H(+). The protein operates within porphyrin-containing compound metabolism; protoporphyrin-IX biosynthesis; 5-aminolevulinate from L-glutamyl-tRNA(Glu): step 1/2. In terms of biological role, catalyzes the NADPH-dependent reduction of glutamyl-tRNA(Glu) to glutamate 1-semialdehyde (GSA). The polypeptide is Glutamyl-tRNA reductase (Chlamydia trachomatis serovar D (strain ATCC VR-885 / DSM 19411 / UW-3/Cx)).